The following is a 1165-amino-acid chain: ATP-dependent helicase/deoxyribonuclease subunit B (1165 aa).

A UvrD-like helicase ATP-binding domain is found at 1–298 (MALRFILGRA…AHLEREFFRR (298 aa)). 8–15 (GRAGTGKT) is an ATP binding site. The UvrD-like helicase C-terminal domain occupies 279–584 (PARFRANPAL…QLALIPPALD (306 aa)). 4 residues coordinate [4Fe-4S] cluster: Cys-800, Cys-1119, Cys-1122, and Cys-1128.

The protein belongs to the helicase family. AddB/RexB type 1 subfamily. In terms of assembly, heterodimer of AddA and AddB. Mg(2+) is required as a cofactor. The cofactor is [4Fe-4S] cluster.

In terms of biological role, the heterodimer acts as both an ATP-dependent DNA helicase and an ATP-dependent, dual-direction single-stranded exonuclease. Recognizes the chi site generating a DNA molecule suitable for the initiation of homologous recombination. The AddB subunit has 5' -&gt; 3' nuclease activity but not helicase activity. The chain is ATP-dependent helicase/deoxyribonuclease subunit B from Desulforudis audaxviator (strain MP104C).